The following is a 382-amino-acid chain: Flap endonuclease 1 (382 aa).

The segment at 1–105 (MGIKGLNAII…HELTKRSSRR (105 aa)) is N-domain. Asp-34 serves as a coordination point for Mg(2+). DNA contacts are provided by Arg-47 and Arg-71. Mg(2+) contacts are provided by Asp-87, Glu-156, Glu-158, Asp-177, and Asp-179. The tract at residues 120–251 (EKMKQERRLV…VTALKLIKTH (132 aa)) is I-domain. A DNA-binding site is contributed by Glu-156. DNA is bound by residues Gly-229 and Asp-231. Asp-231 lines the Mg(2+) pocket. Residues 339 to 347 (IQGRLDGFF) are interaction with PCNA. The tract at residues 358–382 (AAAAKRAQENKKLNKNKNKVTKGRR) is disordered. Positions 370 to 382 (LNKNKNKVTKGRR) are enriched in basic residues.

This sequence belongs to the XPG/RAD2 endonuclease family. FEN1 subfamily. Interacts with PCNA. Three molecules of RAD27 bind to one PCNA trimer with each molecule binding to one PCNA monomer. PCNA stimulates the nuclease activity without altering cleavage specificity. Mg(2+) is required as a cofactor. In terms of processing, phosphorylated. Phosphorylation upon DNA damage induces relocalization to the nuclear plasma.

The protein localises to the nucleus. The protein resides in the nucleolus. It is found in the nucleoplasm. It localises to the mitochondrion. Its function is as follows. Structure-specific nuclease with 5'-flap endonuclease and 5'-3' exonuclease activities involved in DNA replication and repair. During DNA replication, cleaves the 5'-overhanging flap structure that is generated by displacement synthesis when DNA polymerase encounters the 5'-end of a downstream Okazaki fragment. It enters the flap from the 5'-end and then tracks to cleave the flap base, leaving a nick for ligation. Also involved in the long patch base excision repair (LP-BER) pathway, by cleaving within the apurinic/apyrimidinic (AP) site-terminated flap. Acts as a genome stabilization factor that prevents flaps from equilibrating into structures that lead to duplications and deletions. Also possesses 5'-3' exonuclease activity on nicked or gapped double-stranded DNA, and exhibits RNase H activity. Also involved in replication and repair of rDNA and in repairing mitochondrial DNA. In Saccharomyces cerevisiae (strain RM11-1a) (Baker's yeast), this protein is Flap endonuclease 1.